A 1380-amino-acid polypeptide reads, in one-letter code: Respiration factor 2 (1380 aa).

C2H2-type zinc fingers lie at residues 151-173 (FLCPTCTRGFVRQEHLKRHQHSH) and 179-202 (YLCIFCGRCFARRDLVLRHQQKLH). Residues 208–231 (TGDPRRMTPAPNSTSSFASKRRHS) are disordered. Residues Ser-231 and Ser-322 each carry the phosphoserine modification. Disordered regions lie at residues 413–445 (NLNLFNNDPSGQQQQQQQQQQNSTSSTIVNSNN), 544–584 (SPKN…NIDP), 624–643 (SRSSIPNKSPPNHSATSLNH), and 652–688 (LNLSLNGSTDLPSTPQNQLKEPSYSDPISHSSHKRRR). Over residues 424-445 (QQQQQQQQQQNSTSSTIVNSNN) the composition is skewed to low complexity. Ser-544 carries the post-translational modification Phosphoserine. Polar residues predominate over residues 544-569 (SPKNPPTTVSDSSSTINFNPGTNNLL). Basic and acidic residues predominate over residues 575–584 (PNDKDSNIDP). Low complexity predominate over residues 624-634 (SRSSIPNKSPP). Ser-632 bears the Phosphoserine mark. Over residues 652-681 (LNLSLNGSTDLPSTPQNQLKEPSYSDPISH) the composition is skewed to polar residues.

This sequence belongs to the RSF2/TDA9 family.

It is found in the nucleus. Functionally, transcription factor that regulates expression of both nuclear and mitochondrial genes, and more specifically those required for glycerol-based growth and respiration. This is Respiration factor 2 (RSF2) from Saccharomyces cerevisiae (strain ATCC 204508 / S288c) (Baker's yeast).